The sequence spans 269 residues: 4-hydroxy-tetrahydrodipicolinate reductase (269 aa).

NAD(+) contacts are provided by residues 10–15 (GANGRM), Glu-36, 99–101 (GTT), and 123–126 (AANF). Catalysis depends on His-156, which acts as the Proton donor/acceptor. Residue His-157 coordinates (S)-2,3,4,5-tetrahydrodipicolinate. Catalysis depends on Lys-160, which acts as the Proton donor. 166-167 (GT) contacts (S)-2,3,4,5-tetrahydrodipicolinate.

Belongs to the DapB family.

Its subcellular location is the cytoplasm. It carries out the reaction (S)-2,3,4,5-tetrahydrodipicolinate + NAD(+) + H2O = (2S,4S)-4-hydroxy-2,3,4,5-tetrahydrodipicolinate + NADH + H(+). The catalysed reaction is (S)-2,3,4,5-tetrahydrodipicolinate + NADP(+) + H2O = (2S,4S)-4-hydroxy-2,3,4,5-tetrahydrodipicolinate + NADPH + H(+). Its pathway is amino-acid biosynthesis; L-lysine biosynthesis via DAP pathway; (S)-tetrahydrodipicolinate from L-aspartate: step 4/4. Catalyzes the conversion of 4-hydroxy-tetrahydrodipicolinate (HTPA) to tetrahydrodipicolinate. This is 4-hydroxy-tetrahydrodipicolinate reductase from Neisseria gonorrhoeae (strain ATCC 700825 / FA 1090).